Here is a 201-residue protein sequence, read N- to C-terminus: NAD(P)H-dependent FMN reductase ntnL (201 aa).

FMN is bound by residues Arg-12, 90-93 (EYNG), and Tyr-120.

In terms of assembly, homodimer.

It catalyses the reaction FMNH2 + NADP(+) = FMN + NADPH + 2 H(+). It carries out the reaction FMNH2 + NAD(+) = FMN + NADH + 2 H(+). The protein operates within secondary metabolite biosynthesis; terpenoid biosynthesis. In terms of biological role, NAD(P)H-dependent FMN reductase; part of the gene cluster that mediates the biosynthesis of the meroterpenoids nectripenoids A and B, as well as cochliquninone D and isocochliquninone E. The pathway probably begins with the HR-PKS ntnH that catalyzes two chain-extension steps to form a reduced triketide, which then primes the SAT domain in the NR-PKS ntnG to initiate three more cycles of extension to give a linear hexaketide corresponding to the polyketide part of nectripenoids. The FAD-dependent monooxygenase ntnJ then performs an oxidative decarboxylation at C11 of the ntnH/ntnG product, via an electrophilic aromatic hydroxylation with concomitant ipso-decarboxylation. The membrane-bound polyprenyl transferase ntnF then introduces a farnesyl group before the FAD-dependent monooxygenase ntnK functions as the first epoxidase on terminal C12'-C13' olefin, followed by a second epoxidation on C7'-C8' catalyzed by ntnA. The terpene cyclase/mutase ntnI then initiates the sequential tricyclic ring formation through protonation of the terminal epoxide and catalyzes the regioselective and stereoselective 6/6/6-tricyclic ring formation. The cytochrome P450 monooxygenase ntnM may then hydroxylate C1'. The protein is NAD(P)H-dependent FMN reductase ntnL of Nectria sp.